The primary structure comprises 286 residues: MTLKQKWDVYSRLTRIDRPIGTLLLLWPCLMALMLAAGGMPDLKVLVIFIIGVVIMRACGCIINDYADRDLDSFVERTRSRPLASGEISTKEALILFVILGLSAFGLVLLLNGLVVKLSVVGIILTIIYPFTKRITNMPQMFLGIVWSWSIPMAYAAQTGEVPMEAWWLFAANWCWTVAYDTMYAMVDRDDDLKVGIKSTAILFGKYDRQIIGLFQLAALACFIAAGWSADRGLLYGLGILTFVGFSTYQQMLIFDRERAPCFKAFLNNNWAGLALFVGLGADYLI.

The next 7 membrane-spanning stretches (helical) occupy residues 21–40 (GTLL…AGGM), 95–115 (ILFV…NGLV), 142–162 (FLGI…TGEV), 167–187 (WWLF…YAMV), 210–230 (QIIG…GWSA), 235–255 (LYGL…MLIF), and 266–286 (FLNN…DYLI).

The protein belongs to the UbiA prenyltransferase family. It depends on Mg(2+) as a cofactor.

The protein resides in the cell inner membrane. It carries out the reaction all-trans-octaprenyl diphosphate + 4-hydroxybenzoate = 4-hydroxy-3-(all-trans-octaprenyl)benzoate + diphosphate. The protein operates within cofactor biosynthesis; ubiquinone biosynthesis. Catalyzes the prenylation of para-hydroxybenzoate (PHB) with an all-trans polyprenyl group. Mediates the second step in the final reaction sequence of ubiquinone-8 (UQ-8) biosynthesis, which is the condensation of the polyisoprenoid side chain with PHB, generating the first membrane-bound Q intermediate 3-octaprenyl-4-hydroxybenzoate. This Shewanella baltica (strain OS185) protein is 4-hydroxybenzoate octaprenyltransferase.